The sequence spans 405 residues: Deoxyguanosinetriphosphate triphosphohydrolase-like protein (405 aa).

The HD domain occupies 75-219; that stretch reads RLTHTIEVAQ…AAVADDIAYN (145 aa).

This sequence belongs to the dGTPase family. Type 2 subfamily.

This is Deoxyguanosinetriphosphate triphosphohydrolase-like protein from Allorhizobium ampelinum (strain ATCC BAA-846 / DSM 112012 / S4) (Agrobacterium vitis (strain S4)).